The chain runs to 147 residues: Angiogenin (147 aa).

The N-terminal stretch at 1–24 (MVMGLGVLLLVFVLGLGLTPPTLA) is a signal peptide. A Pyrrolidone carboxylic acid modification is found at Q25. Residue H37 is the Proton acceptor of the active site. R45 and D46 together coordinate tRNA. 3 cysteine pairs are disulfide-bonded: C50–C105, C63–C116, and C81–C131. The Nucleolar localization signal signature appears at 55–59 (RRRGL). The tRNA site is built by C105 and V127. The Proton donor role is filled by H138.

Belongs to the pancreatic ribonuclease family. In terms of assembly, homodimer. Interacts with RNH1; inhibiting ANG ribonuclease activity. Interacts with PCNA.

Its subcellular location is the secreted. The protein localises to the nucleus. The protein resides in the nucleolus. It is found in the cytoplasm. It localises to the stress granule. With respect to regulation, has weak tRNA ribonuclease activity by itself due to partial autoinhibition by its C-terminus, which folds into a short alpha-helix that partially occludes the substrate-binding site. In absence of stress, the ribonuclease activity is inhibited by RNH1 in the cytoplasm. In response to stress, dissociates from RNH1 in the cytoplasm and associates with cytoplasmic ribosomes with vacant A-sites: ribosomes directly activate the tRNA ribonuclease activity of ANG by refolding the C-terminal alpha-helix. In response to stress, the angiogenic activity of ANG is inhibited by RNH1 in the nucleus. Secreted ribonuclease that can either promote or restrict cell proliferation of target cells, depending on the context. Endocytosed in target cells via its receptor PLXNB2 and translocates to the cytoplasm or nucleus. Under stress conditions, localizes to the cytoplasm and promotes the assembly of stress granules (SGs): specifically cleaves a subset of tRNAs within anticodon loops to produce tRNA-derived stress-induced fragments (tiRNAs), resulting in translation repression and inhibition of cell proliferation. tiRNas also prevent formation of apoptosome, thereby promoting cell survival. Preferentially cleaves RNAs between a pyrimidine and an adenosine residue, suggesting that it cleaves the anticodon loop of tRNA(Ala) (32-UUAGCAU-38) after positions 33 and 36. Cleaves a subset of tRNAs, including tRNA(Ala), tRNA(Glu), tRNA(Gly), tRNA(Lys), tRNA(Val), tRNA(His), tRNA(Asp) and tRNA(Sec). Under growth conditions and in differentiated cells, translocates to the nucleus and stimulates ribosomal RNA (rRNA) transcription, including that containing the initiation site sequences of 45S rRNA, thereby promoting cell growth and proliferation. Angiogenin induces vascularization of normal and malignant tissues via its ability to promote rRNA transcription. Involved in hematopoietic stem and progenitor cell (HSPC) growth and survival by promoting rRNA transcription in growth conditions and inhibiting translation in response to stress, respectively. Mediates the crosstalk between myeloid and intestinal epithelial cells to protect the intestinal epithelial barrier integrity: secreted by myeloid cells and promotes intestinal epithelial cells proliferation and survival. Also mediates osteoclast-endothelial cell crosstalk in growing bone: produced by osteoclasts and protects the neighboring vascular cells against senescence by promoting rRNA transcription. In Pan troglodytes (Chimpanzee), this protein is Angiogenin (ANG).